The chain runs to 660 residues: DNA mismatch repair protein MutL (660 aa).

Belongs to the DNA mismatch repair MutL/HexB family.

Its function is as follows. This protein is involved in the repair of mismatches in DNA. It is required for dam-dependent methyl-directed DNA mismatch repair. May act as a 'molecular matchmaker', a protein that promotes the formation of a stable complex between two or more DNA-binding proteins in an ATP-dependent manner without itself being part of a final effector complex. In Streptococcus equi subsp. equi (strain 4047), this protein is DNA mismatch repair protein MutL.